The following is an 84-amino-acid chain: MNLFDFFRGRQKQTSASVAKERLQIIVAHERGQRSEPDYLPALQKELLEVIRKYVNIGNDDVHIELENQGSCSILELNITLPDR.

Belongs to the MinE family.

Functionally, prevents the cell division inhibition by proteins MinC and MinD at internal division sites while permitting inhibition at polar sites. This ensures cell division at the proper site by restricting the formation of a division septum at the midpoint of the long axis of the cell. The sequence is that of Cell division topological specificity factor from Pseudomonas putida (strain ATCC 700007 / DSM 6899 / JCM 31910 / BCRC 17059 / LMG 24140 / F1).